A 222-amino-acid chain; its full sequence is GTP cyclohydrolase 1 (222 aa).

The Zn(2+) site is built by Cys-111, His-114, and Cys-182.

This sequence belongs to the GTP cyclohydrolase I family. In terms of assembly, toroid-shaped homodecamer, composed of two pentamers of five dimers.

The enzyme catalyses GTP + H2O = 7,8-dihydroneopterin 3'-triphosphate + formate + H(+). Its pathway is cofactor biosynthesis; 7,8-dihydroneopterin triphosphate biosynthesis; 7,8-dihydroneopterin triphosphate from GTP: step 1/1. The sequence is that of GTP cyclohydrolase 1 from Klebsiella pneumoniae subsp. pneumoniae (strain ATCC 700721 / MGH 78578).